The chain runs to 88 residues: Phosphocarrier protein HPr (88 aa).

The 88-residue stretch at 1–88 (MASKEFHIVV…ETMTKEGLAE (88 aa)) folds into the HPr domain. His15 functions as the Pros-phosphohistidine intermediate in the catalytic mechanism. Position 46 is a phosphoserine; by HPrK/P (Ser46).

The protein belongs to the HPr family.

It is found in the cytoplasm. Phosphorylation on Ser-46 inhibits the phosphoryl transfer from enzyme I to HPr. In terms of biological role, general (non sugar-specific) component of the phosphoenolpyruvate-dependent sugar phosphotransferase system (sugar PTS). This major carbohydrate active-transport system catalyzes the phosphorylation of incoming sugar substrates concomitantly with their translocation across the cell membrane. The phosphoryl group from phosphoenolpyruvate (PEP) is transferred to the phosphoryl carrier protein HPr by enzyme I. Phospho-HPr then transfers it to the PTS EIIA domain. P-Ser-HPr interacts with the catabolite control protein A (CcpA), forming a complex that binds to DNA at the catabolite response elements cre, operator sites preceding a large number of catabolite-regulated genes. Thus, P-Ser-HPr is a corepressor in carbon catabolite repression (CCR), a mechanism that allows bacteria to coordinate and optimize the utilization of available carbon sources. P-Ser-HPr also plays a role in inducer exclusion, in which it probably interacts with several non-PTS permeases and inhibits their transport activity. This chain is Phosphocarrier protein HPr (ptsH), found in Lactococcus lactis subsp. lactis (strain IL1403) (Streptococcus lactis).